Consider the following 314-residue polypeptide: Mitochondrial thiamine pyrophosphate carrier 1 (314 aa).

A run of 6 helical transmembrane segments spans residues 14-30 (VAAW…GLLA), 84-100 (LLYV…YSLF), 116-136 (LVVG…FDVL), 170-186 (GSIA…SIMF), 217-233 (SAGT…TFPL), and 285-302 (GILV…VSFW). Solcar repeat units lie at residues 14–103 (VAAW…FNRY), 110–195 (EARL…IRIY), and 210–310 (ELAT…AIHY).

The protein belongs to the mitochondrial carrier (TC 2.A.29) family.

It is found in the mitochondrion inner membrane. Functionally, mitochondrial transporter that mediates uptake of thiamine pyrophosphate (ThPP) into mitochondria. The sequence is that of Mitochondrial thiamine pyrophosphate carrier 1 (TPC1) from Saccharomyces cerevisiae (strain YJM789) (Baker's yeast).